Here is a 359-residue protein sequence, read N- to C-terminus: 3-dehydroquinate synthase (359 aa).

The protein belongs to the archaeal-type DHQ synthase family.

The enzyme catalyses 2-amino-2,3,7-trideoxy-D-lyxo-hept-6-ulosonate + NAD(+) + H2O = 3-dehydroquinate + NH4(+) + NADH + H(+). Functionally, catalyzes the oxidative deamination and cyclization of 2-amino-3,7-dideoxy-D-threo-hept-6-ulosonic acid (ADH) to yield 3-dehydroquinate (DHQ), which is fed into the canonical shikimic pathway of aromatic amino acid biosynthesis. In Methanosphaera stadtmanae (strain ATCC 43021 / DSM 3091 / JCM 11832 / MCB-3), this protein is 3-dehydroquinate synthase.